The sequence spans 388 residues: L-cysteine desulfidase (388 aa).

The active-site Proton acceptor is Cys25. Residues Cys282, Cys322, and Cys329 each coordinate [4Fe-4S] cluster.

It belongs to the L-cysteine desulfidase family. As to quaternary structure, homotrimer. Requires [4Fe-4S] cluster as cofactor.

The catalysed reaction is L-cysteine + H2O = hydrogen sulfide + pyruvate + NH4(+) + H(+). Its function is as follows. Catalyzes the cleavage of L-cysteine to form 2-aminoprop-2-enoate and sulfide. The former then spontaneously hydrolyzes to pyruvate and NH(3). May be responsible for the production of sulfide required for the biosynthesis of iron-sulfur centers in this archaea. Is very specific for L-cysteine, with no activity being detected with D-cysteine, L-homocysteine, 3-mercaptopropionate (cysteine without the amino group), cysteamine (cysteine without the carboxylate), or mercaptolactate (the hydroxyl analog of cysteine). The polypeptide is L-cysteine desulfidase (Methanocaldococcus jannaschii (strain ATCC 43067 / DSM 2661 / JAL-1 / JCM 10045 / NBRC 100440) (Methanococcus jannaschii)).